The following is a 227-amino-acid chain: Cytidylate kinase (227 aa).

Residue 10-18 (GPASSGKST) participates in ATP binding.

Belongs to the cytidylate kinase family. Type 1 subfamily.

The protein resides in the cytoplasm. It carries out the reaction CMP + ATP = CDP + ADP. It catalyses the reaction dCMP + ATP = dCDP + ADP. This chain is Cytidylate kinase, found in Streptococcus agalactiae serotype Ia (strain ATCC 27591 / A909 / CDC SS700).